A 273-amino-acid polypeptide reads, in one-letter code: Medium-wave-sensitive opsin 1 (273 aa).

Residues 1–5 (APRWV) lie on the Extracellular side of the membrane. The helical transmembrane segment at 6-30 (YHLTSAWMVFVVIASVFTNGLVLAA) threads the bilayer. The Cytoplasmic portion of the chain corresponds to 31–42 (TMRFKKLRHPLN). A helical membrane pass occupies residues 43–68 (WILVNLAIADLVETIIASTISVVNQM). Residues 69–82 (YGYFVLGHPLCVVE) are Extracellular-facing. C79 and C156 are oxidised to a cystine. The helical transmembrane segment at 83–102 (GYTASLCGITGLWSLAIISW) threads the bilayer. Residues 103 to 121 (ERWMVVCRPFGNVRFDAKL) lie on the Cytoplasmic side of the membrane. A helical transmembrane segment spans residues 122–145 (AIAGIAFSWIWAAVWTAPPIFGWS). Over 146-171 (RYWPHGLKTSCGPDVFSGSSYPGVQS) the chain is Extracellular. The helical transmembrane segment at 172-199 (YMIVLMITCCFIPLSVIVLCYLQVWLAI) threads the bilayer. The Cytoplasmic segment spans residues 200-221 (RAVAKQQKESESTQKAEKEVTR). The chain crosses the membrane as a helical span at residues 222–245 (MVMVMIFAFCLCWGPYAFFACFAA). The Extracellular segment spans residues 246-253 (AHPGYAFH). Residues 254–273 (PLVAALPAYFAKSATIYNPI) traverse the membrane as a helical segment. K265 carries the post-translational modification N6-(retinylidene)lysine.

The protein belongs to the G-protein coupled receptor 1 family. Opsin subfamily. In terms of assembly, monomer. Homodimer. Homotetramer. O-glycosylated. In terms of processing, phosphorylated on some or all of the serine and threonine residues present in the C-terminal region. The three color pigments are found in the cone photoreceptor cells.

The protein resides in the membrane. Functionally, visual pigments are the light-absorbing molecules that mediate vision. They consist of an apoprotein, opsin, covalently linked to cis-retinal. This is Medium-wave-sensitive opsin 1 (OPN1MW) from Odocoileus virginianus virginianus (Virginia white-tailed deer).